Reading from the N-terminus, the 488-residue chain is B-type flagellin (488 aa).

The protein belongs to the bacterial flagellin family. Phosphorylated on tyrosine residue(s).

The protein resides in the secreted. It localises to the bacterial flagellum. In terms of biological role, flagellin is the subunit protein which polymerizes to form the filaments of bacterial flagella. The chain is B-type flagellin (fliC) from Pseudomonas aeruginosa (strain ATCC 15692 / DSM 22644 / CIP 104116 / JCM 14847 / LMG 12228 / 1C / PRS 101 / PAO1).